The chain runs to 243 residues: 1-(5-phosphoribosyl)-5-[(5-phosphoribosylamino)methylideneamino] imidazole-4-carboxamide isomerase (243 aa).

D8 acts as the Proton acceptor in catalysis. D129 functions as the Proton donor in the catalytic mechanism.

The protein belongs to the HisA/HisF family.

The protein localises to the cytoplasm. It carries out the reaction 1-(5-phospho-beta-D-ribosyl)-5-[(5-phospho-beta-D-ribosylamino)methylideneamino]imidazole-4-carboxamide = 5-[(5-phospho-1-deoxy-D-ribulos-1-ylimino)methylamino]-1-(5-phospho-beta-D-ribosyl)imidazole-4-carboxamide. Its pathway is amino-acid biosynthesis; L-histidine biosynthesis; L-histidine from 5-phospho-alpha-D-ribose 1-diphosphate: step 4/9. This chain is 1-(5-phosphoribosyl)-5-[(5-phosphoribosylamino)methylideneamino] imidazole-4-carboxamide isomerase, found in Carboxydothermus hydrogenoformans (strain ATCC BAA-161 / DSM 6008 / Z-2901).